A 591-amino-acid chain; its full sequence is V-type ATP synthase alpha chain (591 aa).

242–249 (GPFGAGKT) serves as a coordination point for ATP.

The protein belongs to the ATPase alpha/beta chains family.

The enzyme catalyses ATP + H2O + 4 H(+)(in) = ADP + phosphate + 5 H(+)(out). Produces ATP from ADP in the presence of a proton gradient across the membrane. The V-type alpha chain is a catalytic subunit. The protein is V-type ATP synthase alpha chain of Chlamydia caviae (strain ATCC VR-813 / DSM 19441 / 03DC25 / GPIC) (Chlamydophila caviae).